The following is a 376-amino-acid chain: 23S rRNA (uracil(747)-C(5))-methyltransferase RlmC (376 aa).

[4Fe-4S] cluster-binding residues include cysteine 3, cysteine 11, cysteine 14, and cysteine 87. The S-adenosyl-L-methionine site is built by glutamine 212, phenylalanine 241, glutamate 262, and asparagine 307. Cysteine 334 serves as the catalytic Nucleophile.

The protein belongs to the class I-like SAM-binding methyltransferase superfamily. RNA M5U methyltransferase family. RlmC subfamily.

It carries out the reaction uridine(747) in 23S rRNA + S-adenosyl-L-methionine = 5-methyluridine(747) in 23S rRNA + S-adenosyl-L-homocysteine + H(+). Functionally, catalyzes the formation of 5-methyl-uridine at position 747 (m5U747) in 23S rRNA. This Salmonella newport (strain SL254) protein is 23S rRNA (uracil(747)-C(5))-methyltransferase RlmC.